Consider the following 132-residue polypeptide: UPF0212 protein PYRAB08340 (132 aa).

The protein belongs to the UPF0212 family.

This chain is UPF0212 protein PYRAB08340, found in Pyrococcus abyssi (strain GE5 / Orsay).